Reading from the N-terminus, the 1272-residue chain is MFNFRNLPLFDKDNSKDTDDIKNFINSYEGIYFSSSNKFINVFLDKILIIDPSSLNVITINTDLYVVDFLFNEKNKNLIVLGKGKNSLICSVYNIRECNFTLLKKIQLSKNINNIKKTLIAKCNEYIITLENKKITFYFLNKDYSINQSELIEDGKELIENIYLSKNHILLVIKNSYVYIYQLDIKNSHISYTLIDSFNLNLSYLRESINNKKKHINKINDVSNNDPKKDNNEKNTSSNNITHNNYNDISNNNNNNNNINGVKDHINNNTLENNDEPILSIYNEDLNVLYICQNMYNVLFVLNLNNLSFEFILLENKIINLFSCKFYLILLKEVNKKFFLHIYIIYEDMKLLVSTLLLNEPISNVIFFNNLFCLLIEEEISKPEIKVDKFYFYEQLKLKLHSKLDGDALKILKRDHVTNNINICKQEEKKYKLKNEQKDVEIYNKNNTVDSTNNTIYNSEVNHYKYITNDFFLNEDVNTDIKKELYNLNHTKDNINHDTLKKQTNQNDITMSLSKDEKNNDTNKFFNENMFTLNKFFKNCRNQIKIILKERNINEIINMFKKKKLYQWLIKYANLNKNYQIININFIHKIYADFLFEKEQYENAIYEYIQTINYLETSYVIHKYLNLDLYEYLTIYLEKLHVYHHFNDEHTMMLLSCYKKQCKKKKMISFIKKNKDKINLNKTYKFLLNAGYYNIVLNLSKKYKDHFTYVSILIEKYENYEKSLKYIFKLDVENICILLFKYGYKFIKYYPQLTIYLLKKIIKKYNINLTIFIPLFLDNIDFLFMFIVKFLDKNVNINKINHIQEKQKHHYSNMYHDSDELNSVTKQKNKINSFLLYEKDNNQNHNGIPSDSHNLSDDNNSQESTTAVNLINKTNLQLDIFNGEYDYILFVTVIQILLQKYKKSMQEENQTNNQSSKQTNNQSSKQTNKQSINQSNNQSINQTNNQSIKQTNIQTNKQKGNSTTNKIINKDETNEQNNILTFNIDKLIQNNKDKNINFLSVLLLSIYNYNKGLIYTSTQMNKYDISLLFSIHKFINNTKGKINKINMDEHKPNEQTMQINSSYKILNRNFQKVIYNICINHLKLNGSLSYNYIFYYLSMLNDEKYLIKFIKKIRQDMNLSIFNLIQILKKYNKSYSCIQNMVVAYMNDMNKNINDKCIEIEKDKKELEKIKKKQLKKKYNFYLIDNAYCSICKEILSVPMIHFLCKHSYHSYCLKDNNVCILCHNKDKEKKLLKEKAINSIQNFDEFFKYLQGSTDKFSYISNYLSYGITPK.

The disordered stretch occupies residues 216 to 260 (INKINDVSNNDPKKDNNEKNTSSNNITHNNYNDISNNNNNNNNIN). Over residues 234–260 (KNTSSNNITHNNYNDISNNNNNNNNIN) the composition is skewed to low complexity. The stretch at 608–752 (YIQTINYLET…GYKFIKYYPQ (145 aa)) is one CHCR repeat. The chain crosses the membrane as a helical span at residues 771-791 (IFIPLFLDNIDFLFMFIVKFL). Disordered regions lie at residues 842-862 (NQNH…NNSQ) and 908-970 (ENQT…IINK). Composition is skewed to low complexity over residues 850–861 (SDSHNLSDDNNS) and 909–956 (NQTN…IQTN). Residues 957–967 (KQKGNSTTNKI) are compositionally biased toward polar residues. Positions 1146–1182 (MNDMNKNINDKCIEIEKDKKELEKIKKKQLKKKYNFY) form a coiled coil. An RING-type; atypical zinc finger spans residues 1189–1224 (CSICKEILSVPMIHFLCKHSYHSYCLKDNNVCILCH).

The protein localises to the membrane. In Plasmodium falciparum (isolate 3D7), this protein is RING finger protein PFE0100w.